The chain runs to 179 residues: UPF0227 protein Shewmr7_1806 (179 aa).

The protein belongs to the UPF0227 family.

The polypeptide is UPF0227 protein Shewmr7_1806 (Shewanella sp. (strain MR-7)).